The sequence spans 1780 residues: Protein TIC 214 (1780 aa).

6 consecutive transmembrane segments (helical) span residues Ile-19–Gly-39, Phe-68–Leu-88, Pro-91–Asn-111, Val-133–Leu-153, Val-176–Ile-196, and Ile-227–Ile-247. The disordered stretch occupies residues Lys-251–Ala-275. The span at Gly-254 to Gln-268 shows a compositional bias: basic and acidic residues.

This sequence belongs to the TIC214 family. As to quaternary structure, part of the Tic complex.

It is found in the plastid. The protein resides in the chloroplast inner membrane. In terms of biological role, involved in protein precursor import into chloroplasts. May be part of an intermediate translocation complex acting as a protein-conducting channel at the inner envelope. This is Protein TIC 214 from Draba nemorosa (Woodland whitlowgrass).